The primary structure comprises 491 residues: Glucose-6-phosphate 1-dehydrogenase (491 aa).

Arginine 51 and lysine 150 together coordinate NADP(+). The substrate site is built by histidine 180, lysine 184, glutamate 218, and aspartate 237. Residue histidine 242 is the Proton acceptor of the active site. A substrate-binding site is contributed by lysine 341.

It belongs to the glucose-6-phosphate dehydrogenase family.

It carries out the reaction D-glucose 6-phosphate + NADP(+) = 6-phospho-D-glucono-1,5-lactone + NADPH + H(+). It participates in carbohydrate degradation; pentose phosphate pathway; D-ribulose 5-phosphate from D-glucose 6-phosphate (oxidative stage): step 1/3. Catalyzes the oxidation of glucose 6-phosphate to 6-phosphogluconolactone. This chain is Glucose-6-phosphate 1-dehydrogenase, found in Rhizobium meliloti (strain 1021) (Ensifer meliloti).